The chain runs to 272 residues: Shikimate dehydrogenase (NADP(+)) (272 aa).

Shikimate-binding positions include 14–16 and Thr-61; that span reads SKS. Lys-65 serves as the catalytic Proton acceptor. Glu-77 provides a ligand contact to NADP(+). Shikimate is bound by residues Asn-86 and Asp-102. Residues 126–130, 149–154, and Met-213 contribute to the NADP(+) site; these read GAGGA and NRTASR. Residue Tyr-215 participates in shikimate binding. Residue Gly-237 coordinates NADP(+).

Belongs to the shikimate dehydrogenase family. As to quaternary structure, homodimer.

It catalyses the reaction shikimate + NADP(+) = 3-dehydroshikimate + NADPH + H(+). The protein operates within metabolic intermediate biosynthesis; chorismate biosynthesis; chorismate from D-erythrose 4-phosphate and phosphoenolpyruvate: step 4/7. Involved in the biosynthesis of the chorismate, which leads to the biosynthesis of aromatic amino acids. Catalyzes the reversible NADPH linked reduction of 3-dehydroshikimate (DHSA) to yield shikimate (SA). The protein is Shikimate dehydrogenase (NADP(+)) of Salmonella paratyphi A (strain ATCC 9150 / SARB42).